A 1097-amino-acid chain; its full sequence is DNA-directed RNA polymerase subunit beta (1097 aa).

The interval glutamine 1072–aspartate 1097 is disordered.

The protein belongs to the RNA polymerase beta chain family. In cyanobacteria the RNAP catalytic core is composed of 2 alpha, 1 beta, 1 beta', 1 gamma and 1 omega subunit. When a sigma factor is associated with the core the holoenzyme is formed, which can initiate transcription.

It carries out the reaction RNA(n) + a ribonucleoside 5'-triphosphate = RNA(n+1) + diphosphate. In terms of biological role, DNA-dependent RNA polymerase catalyzes the transcription of DNA into RNA using the four ribonucleoside triphosphates as substrates. The sequence is that of DNA-directed RNA polymerase subunit beta from Synechococcus sp. (strain WH7803).